A 197-amino-acid chain; its full sequence is dITP/XTP pyrophosphatase (197 aa).

8-13 (TGNAGK) serves as a coordination point for substrate. 2 residues coordinate Mg(2+): Glu-40 and Asp-69. Catalysis depends on Asp-69, which acts as the Proton acceptor. Residues Ser-70, 154-157 (FGYD), Lys-177, and 182-183 (HR) contribute to the substrate site.

It belongs to the HAM1 NTPase family. As to quaternary structure, homodimer. It depends on Mg(2+) as a cofactor.

The enzyme catalyses XTP + H2O = XMP + diphosphate + H(+). It catalyses the reaction dITP + H2O = dIMP + diphosphate + H(+). It carries out the reaction ITP + H2O = IMP + diphosphate + H(+). Pyrophosphatase that catalyzes the hydrolysis of nucleoside triphosphates to their monophosphate derivatives, with a high preference for the non-canonical purine nucleotides XTP (xanthosine triphosphate), dITP (deoxyinosine triphosphate) and ITP. Seems to function as a house-cleaning enzyme that removes non-canonical purine nucleotides from the nucleotide pool, thus preventing their incorporation into DNA/RNA and avoiding chromosomal lesions. The protein is dITP/XTP pyrophosphatase (rdgB) of Shigella flexneri.